Consider the following 195-residue polypeptide: Imidazoleglycerol-phosphate dehydratase (195 aa).

The protein belongs to the imidazoleglycerol-phosphate dehydratase family.

The protein localises to the cytoplasm. The catalysed reaction is D-erythro-1-(imidazol-4-yl)glycerol 3-phosphate = 3-(imidazol-4-yl)-2-oxopropyl phosphate + H2O. It participates in amino-acid biosynthesis; L-histidine biosynthesis; L-histidine from 5-phospho-alpha-D-ribose 1-diphosphate: step 6/9. This chain is Imidazoleglycerol-phosphate dehydratase, found in Acetivibrio thermocellus (strain ATCC 27405 / DSM 1237 / JCM 9322 / NBRC 103400 / NCIMB 10682 / NRRL B-4536 / VPI 7372) (Clostridium thermocellum).